The following is a 347-amino-acid chain: DNA-directed RNA polymerase subunit alpha (347 aa).

The segment at 1-230 is alpha N-terminal domain (alpha-NTD); sequence MFKGFQKPKR…DHMTIFINFE (230 aa). Positions 247–347 are alpha C-terminal domain (alpha-CTD); it reads MNEVLNRSVE…EDDGQDQIGE (101 aa). The interval 320-347 is disordered; sequence GRLVAPPPSAGGGPDFGPEDDGQDQIGE. Acidic residues predominate over residues 336-347; sequence GPEDDGQDQIGE.

Belongs to the RNA polymerase alpha chain family. As to quaternary structure, homodimer. The RNAP catalytic core consists of 2 alpha, 1 beta, 1 beta' and 1 omega subunit. When a sigma factor is associated with the core the holoenzyme is formed, which can initiate transcription.

It catalyses the reaction RNA(n) + a ribonucleoside 5'-triphosphate = RNA(n+1) + diphosphate. In terms of biological role, DNA-dependent RNA polymerase catalyzes the transcription of DNA into RNA using the four ribonucleoside triphosphates as substrates. The sequence is that of DNA-directed RNA polymerase subunit alpha from Solibacter usitatus (strain Ellin6076).